We begin with the raw amino-acid sequence, 354 residues long: Uroporphyrinogen decarboxylase (354 aa).

Substrate contacts are provided by residues 27–31 (RQAGR), Asp77, Tyr154, Ser209, and His327.

The protein belongs to the uroporphyrinogen decarboxylase family. In terms of assembly, homodimer.

It localises to the cytoplasm. It catalyses the reaction uroporphyrinogen III + 4 H(+) = coproporphyrinogen III + 4 CO2. It participates in porphyrin-containing compound metabolism; protoporphyrin-IX biosynthesis; coproporphyrinogen-III from 5-aminolevulinate: step 4/4. Its function is as follows. Catalyzes the decarboxylation of four acetate groups of uroporphyrinogen-III to yield coproporphyrinogen-III. The protein is Uroporphyrinogen decarboxylase of Shewanella halifaxensis (strain HAW-EB4).